The following is a 310-amino-acid chain: Tyrosine recombinase XerC (310 aa).

Positions 1-92 (MDELIKEFDR…SLRAFFKYLH (92 aa)) constitute a Core-binding (CB) domain. The 188-residue stretch at 113 to 300 (YIPAVLSVDE…SVNRLMAVYD (188 aa)) folds into the Tyr recombinase domain. Residues Arg-153, Lys-177, His-252, Arg-255, and His-278 contribute to the active site. Tyr-287 acts as the O-(3'-phospho-DNA)-tyrosine intermediate in catalysis.

Belongs to the 'phage' integrase family. XerC subfamily. Forms a cyclic heterotetrameric complex composed of two molecules of XerC and two molecules of XerD.

It localises to the cytoplasm. Its function is as follows. Site-specific tyrosine recombinase, which acts by catalyzing the cutting and rejoining of the recombining DNA molecules. The XerC-XerD complex is essential to convert dimers of the bacterial chromosome into monomers to permit their segregation at cell division. It also contributes to the segregational stability of plasmids. The polypeptide is Tyrosine recombinase XerC (Syntrophus aciditrophicus (strain SB)).